Here is a 306-residue protein sequence, read N- to C-terminus: Beta-lactamase 1 (306 aa).

An N-terminal signal peptide occupies residues 1 to 43; sequence MKNKRMLKIGMCVGILGLSVTSLEAFTGGALQVEAKEKTGQVK. The active-site Acyl-ester intermediate is the Ser-89. Glu-185 (proton acceptor) is an active-site residue. 251-253 serves as a coordination point for substrate; sequence KSG.

It belongs to the class-A beta-lactamase family.

It catalyses the reaction a beta-lactam + H2O = a substituted beta-amino acid. In terms of biological role, this protein is a beta-lactamase with a substrate specificity for penicillins. This chain is Beta-lactamase 1 (blaCI), found in Bacillus mycoides.